Consider the following 598-residue polypeptide: Serine/threonine-protein kinase cot-1 (598 aa).

Polar residues-rich tracts occupy residues 1-16, 24-33, and 99-126; these read MDNTNRPHLNLGTNDT, TYPTTPSTFP, and PRTSGNSGQQQTYGNYLSAPMPSNTQTE. Disordered regions lie at residues 1–46, 80–148, and 163–190; these read MDNT…GGSQ, GSAG…NQKK, and RARERNQRQSEMEQKLGETNDARRRESI. The 305-residue stretch at 214–518 folds into the Protein kinase domain; it reads YQTIKIIGKG…AHEIKSHAFF (305 aa). Residues 220–228 and Lys243 contribute to the ATP site; that span reads IGKGAFGEV. The active-site Proton acceptor is Asp337. An AGC-kinase C-terminal domain is found at 519–598; it reads RGVEFDSLRR…TFKRFDNNFR (80 aa).

Belongs to the protein kinase superfamily. STE Ser/Thr protein kinase family. COT1 subfamily.

The enzyme catalyses L-seryl-[protein] + ATP = O-phospho-L-seryl-[protein] + ADP + H(+). It carries out the reaction L-threonyl-[protein] + ATP = O-phospho-L-threonyl-[protein] + ADP + H(+). Its function is as follows. Protein kinase required for hyphal elongation. The chain is Serine/threonine-protein kinase cot-1 (cot-1) from Neurospora crassa (strain ATCC 24698 / 74-OR23-1A / CBS 708.71 / DSM 1257 / FGSC 987).